The primary structure comprises 205 residues: Probable GTP-binding protein EngB (205 aa).

Residues 22–196 enclose the EngB-type G domain; the sequence is NLPEVAFVGR…LKVLDEFIHK (175 aa). Residues 30–37, 57–61, 76–79, 143–146, and 175–177 contribute to the GTP site; these read GRSNVGKS, GRTQL, DLPG, TKVD, and FSA. Mg(2+)-binding residues include serine 37 and threonine 59.

Belongs to the TRAFAC class TrmE-Era-EngA-EngB-Septin-like GTPase superfamily. EngB GTPase family. Mg(2+) serves as cofactor.

Its function is as follows. Necessary for normal cell division and for the maintenance of normal septation. In Desulforamulus reducens (strain ATCC BAA-1160 / DSM 100696 / MI-1) (Desulfotomaculum reducens), this protein is Probable GTP-binding protein EngB.